The chain runs to 355 residues: Peptide chain release factor 1 (355 aa).

The residue at position 231 (glutamine 231) is an N5-methylglutamine. The segment at 283-303 (NAQNKEARKTQVGSGDRSERI) is disordered.

Belongs to the prokaryotic/mitochondrial release factor family. Methylated by PrmC. Methylation increases the termination efficiency of RF1.

It is found in the cytoplasm. In terms of biological role, peptide chain release factor 1 directs the termination of translation in response to the peptide chain termination codons UAG and UAA. This is Peptide chain release factor 1 from Helicobacter hepaticus (strain ATCC 51449 / 3B1).